Consider the following 223-residue polypeptide: 2-C-methyl-D-erythritol 4-phosphate cytidylyltransferase (223 aa).

The protein belongs to the IspD/TarI cytidylyltransferase family. IspD subfamily.

It catalyses the reaction 2-C-methyl-D-erythritol 4-phosphate + CTP + H(+) = 4-CDP-2-C-methyl-D-erythritol + diphosphate. Its pathway is isoprenoid biosynthesis; isopentenyl diphosphate biosynthesis via DXP pathway; isopentenyl diphosphate from 1-deoxy-D-xylulose 5-phosphate: step 2/6. Functionally, catalyzes the formation of 4-diphosphocytidyl-2-C-methyl-D-erythritol from CTP and 2-C-methyl-D-erythritol 4-phosphate (MEP). In Synechococcus sp. (strain WH7803), this protein is 2-C-methyl-D-erythritol 4-phosphate cytidylyltransferase.